Here is a 102-residue protein sequence, read N- to C-terminus: NADH-quinone oxidoreductase subunit K (102 aa).

3 helical membrane passes run 5–25 (IAHY…GIFL), 31–51 (IIIL…FVAF), and 66–86 (FILT…VVFF).

It belongs to the complex I subunit 4L family. In terms of assembly, NDH-1 is composed of 14 different subunits. Subunits NuoA, H, J, K, L, M, N constitute the membrane sector of the complex.

The protein resides in the cell inner membrane. It carries out the reaction a quinone + NADH + 5 H(+)(in) = a quinol + NAD(+) + 4 H(+)(out). Functionally, NDH-1 shuttles electrons from NADH, via FMN and iron-sulfur (Fe-S) centers, to quinones in the respiratory chain. The immediate electron acceptor for the enzyme in this species is believed to be ubiquinone. Couples the redox reaction to proton translocation (for every two electrons transferred, four hydrogen ions are translocated across the cytoplasmic membrane), and thus conserves the redox energy in a proton gradient. This Bartonella bacilliformis (strain ATCC 35685 / KC583 / Herrer 020/F12,63) protein is NADH-quinone oxidoreductase subunit K.